The primary structure comprises 106 residues: CLAVATA3/ESR (CLE)-related protein 21 (106 aa).

The N-terminal stretch at 1-31 (MLILSSRYAMKRDVLIIVIFTVLVLIIISRS) is a signal peptide. Asparagine 47 carries an N-linked (GlcNAc...) asparagine glycan. Basic residues predominate over residues 72-82 (KVRRRSSRFRR). The tract at residues 72–106 (KVRRRSSRFRRKTDGDEEEEEKRSIPTGPNPLHNK) is disordered. Residues proline 97 and proline 100 each carry the hydroxyproline modification. O-linked (Ara...) hydroxyproline glycosylation is present at proline 100.

This sequence belongs to the CLV3/ESR signal peptide family. In terms of processing, the O-glycosylation (arabinosylation) of the hydroxyproline Pro-100 enhances binding affinity of the CLE21p peptide for its receptor. Mostly expressed in leaves and apex, and, to a lower extent, in seedlings, flowers, stems and siliques.

The protein resides in the secreted. It is found in the extracellular space. Its function is as follows. Extracellular signal peptide that regulates cell fate. Represses root apical meristem maintenance. Regulates the transition of protophloem cells from proliferation to differentiation, thus impinging on postembryonic growth capacity of the root meristem; this signaling pathway requires CRN and CLV2. This Arabidopsis thaliana (Mouse-ear cress) protein is CLAVATA3/ESR (CLE)-related protein 21.